The primary structure comprises 218 residues: Ribosome maturation factor RimM (218 aa).

The PRC barrel domain maps to 141–214 (GELWWDRDLV…HIVVDPPPGL (74 aa)).

Belongs to the RimM family. In terms of assembly, binds ribosomal protein uS19.

The protein resides in the cytoplasm. An accessory protein needed during the final step in the assembly of 30S ribosomal subunit, possibly for assembly of the head region. Essential for efficient processing of 16S rRNA. May be needed both before and after RbfA during the maturation of 16S rRNA. It has affinity for free ribosomal 30S subunits but not for 70S ribosomes. The protein is Ribosome maturation factor RimM of Parafrankia sp. (strain EAN1pec).